A 215-amino-acid chain; its full sequence is MEVNNETMQKSKFGRICVFCGSSQGKKSSYQDAAVDLGNELVLRNIDLVYGGGSIGLMGLVSQAVHDGGRHVIGVIPKTLMPRELTGETVGEVRAVADMHQRKAEMARHSDAFIALPGGYGTLEELLEVITWAQLGIHDKPVGLLNVDGYYNSLLSFIDKAVEEGFISTNARQIIISAPTAKELVKKLEEYSPCHESVATKLCWEIERIDYSSED.

Residues Glu-84, 102–103, 119–125, and Thr-131 each bind substrate; these read RK and GYGTLEE.

It belongs to the LOG family. As to expression, expressed in roots and shoots. Detected in root procambium, lateral root primordia, vascular tissues of cotyledons, leaves and stems, shoot apical meristem, axillary buds, young inflorescences, fruit abscission zones and basal part of ovules.

The protein resides in the cytoplasm. The protein localises to the nucleus. The catalysed reaction is N(6)-(dimethylallyl)adenosine 5'-phosphate + H2O = N(6)-dimethylallyladenine + D-ribose 5-phosphate. The enzyme catalyses 9-ribosyl-trans-zeatin 5'-phosphate + H2O = trans-zeatin + D-ribose 5-phosphate. Its function is as follows. Cytokinin-activating enzyme working in the direct activation pathway. Phosphoribohydrolase that converts inactive cytokinin nucleotides to the biologically active free-base forms. This chain is Cytokinin riboside 5'-monophosphate phosphoribohydrolase LOG4 (LOG4), found in Arabidopsis thaliana (Mouse-ear cress).